Reading from the N-terminus, the 213-residue chain is Large ribosomal subunit protein bL25 (213 aa).

Residues 191–207 (AEPTDAPTAPAAAPGAE) show a composition bias toward low complexity. The segment at 191 to 213 (AEPTDAPTAPAAAPGAEAPKDKA) is disordered.

The protein belongs to the bacterial ribosomal protein bL25 family. CTC subfamily. In terms of assembly, part of the 50S ribosomal subunit; part of the 5S rRNA/L5/L18/L25 subcomplex. Contacts the 5S rRNA. Binds to the 5S rRNA independently of L5 and L18.

Its function is as follows. This is one of the proteins that binds to the 5S RNA in the ribosome where it forms part of the central protuberance. This is Large ribosomal subunit protein bL25 from Polynucleobacter asymbioticus (strain DSM 18221 / CIP 109841 / QLW-P1DMWA-1) (Polynucleobacter necessarius subsp. asymbioticus).